The chain runs to 328 residues: Probable ABC transporter permease YtrC (328 aa).

8 helical membrane passes run 16 to 36, 60 to 80, 110 to 130, 144 to 164, 167 to 187, 236 to 256, 277 to 297, and 300 to 320; these read VVIL…IVNT, ISNL…CFLG, GFVI…LILV, IGVI…GALT, AFAQ…IIAL, YLLL…FISF, VQIL…YYTG, and IIGY…VSYF.

The protein belongs to the ABC-5 integral membrane protein family. In terms of assembly, the complex is composed of 2 ATP-binding proteins (YtrB and YtrE), 2 transmembrane proteins (YtrC and YtrD) and a solute-binding protein (YtrF).

The protein resides in the cell membrane. Part of the ABC transporter complex YtrBCDEF that plays a role in acetoin utilization during stationary phase and sporulation. The sequence is that of Probable ABC transporter permease YtrC (ytrC) from Bacillus subtilis (strain 168).